A 290-amino-acid polypeptide reads, in one-letter code: tRNA(Ile)-lysidine synthase (290 aa).

Residue 12–17 (SGGSDS) coordinates ATP.

It belongs to the tRNA(Ile)-lysidine synthase family.

The protein resides in the cytoplasm. The enzyme catalyses cytidine(34) in tRNA(Ile2) + L-lysine + ATP = lysidine(34) in tRNA(Ile2) + AMP + diphosphate + H(+). Functionally, ligates lysine onto the cytidine present at position 34 of the AUA codon-specific tRNA(Ile) that contains the anticodon CAU, in an ATP-dependent manner. Cytidine is converted to lysidine, thus changing the amino acid specificity of the tRNA from methionine to isoleucine. The polypeptide is tRNA(Ile)-lysidine synthase (Mycoplasma genitalium (strain ATCC 33530 / DSM 19775 / NCTC 10195 / G37) (Mycoplasmoides genitalium)).